A 506-amino-acid chain; its full sequence is Maturase K (506 aa).

It belongs to the intron maturase 2 family. MatK subfamily.

The protein localises to the plastid. It is found in the chloroplast. Functionally, usually encoded in the trnK tRNA gene intron. Probably assists in splicing its own and other chloroplast group II introns. The protein is Maturase K of Lactuca sativa (Garden lettuce).